Reading from the N-terminus, the 151-residue chain is SsrA-binding protein (151 aa).

The protein belongs to the SmpB family.

Its subcellular location is the cytoplasm. Functionally, required for rescue of stalled ribosomes mediated by trans-translation. Binds to transfer-messenger RNA (tmRNA), required for stable association of tmRNA with ribosomes. tmRNA and SmpB together mimic tRNA shape, replacing the anticodon stem-loop with SmpB. tmRNA is encoded by the ssrA gene; the 2 termini fold to resemble tRNA(Ala) and it encodes a 'tag peptide', a short internal open reading frame. During trans-translation Ala-aminoacylated tmRNA acts like a tRNA, entering the A-site of stalled ribosomes, displacing the stalled mRNA. The ribosome then switches to translate the ORF on the tmRNA; the nascent peptide is terminated with the 'tag peptide' encoded by the tmRNA and targeted for degradation. The ribosome is freed to recommence translation, which seems to be the essential function of trans-translation. This chain is SsrA-binding protein, found in Wolinella succinogenes (strain ATCC 29543 / DSM 1740 / CCUG 13145 / JCM 31913 / LMG 7466 / NCTC 11488 / FDC 602W) (Vibrio succinogenes).